Reading from the N-terminus, the 400-residue chain is Large envelope protein (400 aa).

2 disordered regions span residues 1–50 and 84–116; these read MGGW…PHKD and ILTS…RDTH. Residue Gly2 is the site of N-myristoyl glycine; by host attachment. A pre-S1 region spans residues 2 to 119; it reads GGWSSKPRKG…PPLRDTHPQA (118 aa). Positions 2–174 are pre-S; the sequence is GGWSSKPRKG…LSTTGDPVPN (173 aa). Over 2 to 181 the chain is Virion surface; in external conformation; sequence GGWSSKPRKG…VPNMENIASG (180 aa). Residues 2–253 lie on the Intravirion; in internal conformation side of the membrane; sequence GGWSSKPRKG…PGYRWMCLRR (252 aa). Residues 96 to 106 are compositionally biased toward polar residues; sequence STNRQSGRQPT. The interval 120-174 is pre-S2; the sequence is VQWNSTTFHQTLQDPRVRALYLPAGGSSSGTVSPAQNTVSAISSILSTTGDPVPN. The chain crosses the membrane as a helical span at residues 182–202; that stretch reads LLGPLLVLQAGFFSLTKILTI. Over 203–253 the chain is Intravirion; in external conformation; it reads PQSLDSWWTSLNFLGGTPVCLGQNSQSQISSHSPTCCPPICPGYRWMCLRR. The chain crosses the membrane as a helical span at residues 254-274; sequence FIIFLCILLLCLIFLLVLLDY. Residues 275 to 348 lie on the Virion surface side of the membrane; it reads QGMLPVCPLI…WASVRFSWLS (74 aa). N-linked (GlcNAc...) asparagine; by host glycosylation occurs at Asn320. The chain crosses the membrane as a helical span at residues 349–369; the sequence is LLVPFVQWFVGLSPTVWLSVI. Topologically, residues 370–375 are intravirion; the sequence is WMMWFW. A helical transmembrane segment spans residues 376–398; it reads GPSLYNILSPFMPLLPIFLCLWV. At 399–400 the chain is on the virion surface side; the sequence is YM.

Belongs to the orthohepadnavirus major surface antigen family. As to quaternary structure, li-HBsAg interacts with capsid protein and with HDV Large delta antigen. Isoform M associates with host chaperone CANX through its pre-S2 N glycan. This association may be essential for M proper secretion. Interacts (via its myristoylated pre-S1 region) with the host SLC10A1/NTCP; this interaction is essential for viral entry. In terms of processing, isoform M is N-terminally acetylated by host at a ratio of 90%, and N-glycosylated by host at the pre-S2 region. Post-translationally, myristoylated; this modification is essential for its interaction with the host protein SLC10A1/NTCP.

The protein localises to the virion membrane. Its function is as follows. The large envelope protein exists in two topological conformations, one which is termed 'external' or Le-HBsAg and the other 'internal' or Li-HBsAg. In its external conformation the protein attaches the virus to cell receptors and thereby initiating infection. This interaction determines the species specificity and liver tropism. This attachment induces virion internalization predominantly through caveolin-mediated endocytosis. The large envelope protein also assures fusion between virion membrane and endosomal membrane. In its internal conformation the protein plays a role in virion morphogenesis and mediates the contact with the nucleocapsid like a matrix protein. Functionally, the middle envelope protein plays an important role in the budding of the virion. It is involved in the induction of budding in a nucleocapsid independent way. In this process the majority of envelope proteins bud to form subviral lipoprotein particles of 22 nm of diameter that do not contain a nucleocapsid. This is Large envelope protein from Homo sapiens (Human).